A 560-amino-acid polypeptide reads, in one-letter code: Probable sulfate transporter Rv1739c (560 aa).

The segment at 1-436 is required for sulfate transport in E.coli; that stretch reads MIPTMTSAGW…VLGFVPGIAG (436 aa). A run of 11 helical transmembrane segments spans residues 29–49, 51–71, 79–99, 105–125, 138–158, 184–204, 207–227, 256–276, 333–353, 355–375, and 394–414; these read VLAG…YATV, GLPP…YALL, IGPE…MAAG, AVLA…AGTA, VLVG…LGTI, WPTF…TRWA, APGP…MSLD, ALII…VLTA, LIAL…LAMF, IAAL…LSEF, and AAVL…LSIL. Positions 442–557 constitute an STAS domain; the sequence is DYPQAKRVPG…MTLPTAVQAF (116 aa).

This sequence belongs to the SLC26A/SulP transporter (TC 2.A.53) family.

The protein localises to the cell membrane. Its function is as follows. Expression in E.coli induces sulfate uptake during early- to mid-log phase growth. Uptake is maximal at pH 6.0, is sulfate-specific, requires E.coli CysA and the transmembrane segment but not the STAS domain of the protein. The polypeptide is Probable sulfate transporter Rv1739c (Mycobacterium tuberculosis (strain ATCC 25618 / H37Rv)).